Consider the following 114-residue polypeptide: C-X-C motif chemokine 6 (114 aa).

An N-terminal signal peptide occupies residues 1–37 (MSLPSSRAARVPGPSGSLCALLALLLLLTPPGPLASA). 2 cysteine pairs are disulfide-bonded: C49–C75 and C51–C91.

The protein belongs to the intercrine alpha (chemokine CxC) family.

The protein localises to the secreted. Functionally, chemotactic for neutrophil granulocytes. Signals through binding and activation of its receptors (CXCR1 and CXCR2). In addition to its chemotactic and angiogenic properties, it has strong antibacterial activity against Gram-positive and Gram-negative bacteria (90-fold-higher when compared to CXCL5 and CXCL7). The protein is C-X-C motif chemokine 6 (CXCL6) of Homo sapiens (Human).